Consider the following 368-residue polypeptide: Spermidine/putrescine import ATP-binding protein PotA (368 aa).

The 231-residue stretch at 6 to 236 (VSIKNVSKFF…PVNVFAATFI (231 aa)) folds into the ABC transporter domain. 38 to 45 (GPSGCGKT) lines the ATP pocket.

This sequence belongs to the ABC transporter superfamily. Spermidine/putrescine importer (TC 3.A.1.11.1) family. The complex is composed of two ATP-binding proteins (PotA), two transmembrane proteins (PotB and PotC) and a solute-binding protein (PotD).

Its subcellular location is the cell inner membrane. The catalysed reaction is ATP + H2O + polyamine-[polyamine-binding protein]Side 1 = ADP + phosphate + polyamineSide 2 + [polyamine-binding protein]Side 1.. Functionally, part of the ABC transporter complex PotABCD involved in spermidine/putrescine import. Responsible for energy coupling to the transport system. This chain is Spermidine/putrescine import ATP-binding protein PotA, found in Thermotoga maritima (strain ATCC 43589 / DSM 3109 / JCM 10099 / NBRC 100826 / MSB8).